A 103-amino-acid chain; its full sequence is Small ribosomal subunit protein uS14c (103 aa).

Residues 34–56 are disordered; the sequence is KVSPLSLSEKTKMREKLQSLPRN.

Belongs to the universal ribosomal protein uS14 family. Part of the 30S ribosomal subunit.

The protein localises to the plastid. The protein resides in the chloroplast. Binds 16S rRNA, required for the assembly of 30S particles. In Triticum aestivum (Wheat), this protein is Small ribosomal subunit protein uS14c.